The following is a 179-amino-acid chain: ATP-dependent protease subunit HslV (179 aa).

Residue threonine 9 is part of the active site. The Na(+) site is built by alanine 164, cysteine 167, and threonine 170.

It belongs to the peptidase T1B family. HslV subfamily. In terms of assembly, a double ring-shaped homohexamer of HslV is capped on each side by a ring-shaped HslU homohexamer. The assembly of the HslU/HslV complex is dependent on binding of ATP.

It is found in the cytoplasm. The catalysed reaction is ATP-dependent cleavage of peptide bonds with broad specificity.. With respect to regulation, allosterically activated by HslU binding. Protease subunit of a proteasome-like degradation complex believed to be a general protein degrading machinery. The sequence is that of ATP-dependent protease subunit HslV from Syntrophobacter fumaroxidans (strain DSM 10017 / MPOB).